A 533-amino-acid chain; its full sequence is Berberine bridge enzyme-like 28 (533 aa).

Residues 1–23 (MEFSSFLFTILLFSLNISPLVSA) form the signal peptide. A disulfide bond links Cys34 and Cys96. Residues 74–249 (ETPKPVSIIT…LSWKVKLVDV (176 aa)) enclose the FAD-binding PCMH-type domain. Position 111 is a pros-8alpha-FAD histidine (His111). N-linked (GlcNAc...) asparagine glycosylation is found at Asn142 and Asn440.

The protein belongs to the oxygen-dependent FAD-linked oxidoreductase family. Requires FAD as cofactor.

Its subcellular location is the secreted. The protein localises to the cell wall. Functionally, involved in adaptation to salt stress. The sequence is that of Berberine bridge enzyme-like 28 from Arabidopsis thaliana (Mouse-ear cress).